The primary structure comprises 279 residues: MSNAPYDPATEGARMNFKGRMSYGDYLMLERLLDAQAPLSSAHDELLFIIQHQTSELWMKLAIHEIKAAMAAIARDDVQPAFKMLARVSRIFEQLNGAWDVLRTMTPSEYTLFRDKLGESSGFQSFQYRSIEFLLGNRNLAMLRPHAHHPELTAELESILAKPSLYDEALRLLARRGFFIGADGQRTDWRGTRAESAEVAAAWTSVYRDPQRHWELYELAEKLVDFEDYFRRWRFNHVTTVERIIGFKTGTGGTSGVNYLRKMLEIVLFPELWKLRTGL.

Residues 48–52 (FIIQH), Tyr110, and Arg114 contribute to the substrate site. Heme is bound at residue His237. Substrate is bound at residue Thr251.

This sequence belongs to the tryptophan 2,3-dioxygenase family. As to quaternary structure, homotetramer. The cofactor is heme.

The enzyme catalyses L-tryptophan + O2 = N-formyl-L-kynurenine. Its pathway is amino-acid degradation; L-tryptophan degradation via kynurenine pathway; L-kynurenine from L-tryptophan: step 1/2. Heme-dependent dioxygenase that catalyzes the oxidative cleavage of the L-tryptophan (L-Trp) pyrrole ring and converts L-tryptophan to N-formyl-L-kynurenine. Catalyzes the oxidative cleavage of the indole moiety. The protein is Tryptophan 2,3-dioxygenase of Bradyrhizobium sp. (strain ORS 278).